A 98-amino-acid chain; its full sequence is Acylphosphatase (98 aa).

The Acylphosphatase-like domain occupies 10–96 (ARLLRIRGRV…TDGAGFDCLP (87 aa)). Catalysis depends on residues arginine 25 and asparagine 43.

The protein belongs to the acylphosphatase family.

The enzyme catalyses an acyl phosphate + H2O = a carboxylate + phosphate + H(+). This is Acylphosphatase (acyP) from Azoarcus sp. (strain BH72).